The chain runs to 262 residues: 3-methyl-2-oxobutanoate hydroxymethyltransferase (262 aa).

Residues Asp42 and Asp81 each contribute to the Mg(2+) site. Residues 42–43, Asp81, and Lys110 each bind 3-methyl-2-oxobutanoate; that span reads DS. Glu112 is a Mg(2+) binding site. Glu180 functions as the Proton acceptor in the catalytic mechanism.

It belongs to the PanB family. As to quaternary structure, homodecamer; pentamer of dimers. The cofactor is Mg(2+).

The protein resides in the cytoplasm. The enzyme catalyses 3-methyl-2-oxobutanoate + (6R)-5,10-methylene-5,6,7,8-tetrahydrofolate + H2O = 2-dehydropantoate + (6S)-5,6,7,8-tetrahydrofolate. Its pathway is cofactor biosynthesis; (R)-pantothenate biosynthesis; (R)-pantoate from 3-methyl-2-oxobutanoate: step 1/2. In terms of biological role, catalyzes the reversible reaction in which hydroxymethyl group from 5,10-methylenetetrahydrofolate is transferred onto alpha-ketoisovalerate to form ketopantoate. In Legionella pneumophila subsp. pneumophila (strain Philadelphia 1 / ATCC 33152 / DSM 7513), this protein is 3-methyl-2-oxobutanoate hydroxymethyltransferase.